Reading from the N-terminus, the 104-residue chain is SOSS complex subunit C (104 aa).

Ala-2 carries the post-translational modification N-acetylalanine. Ser-50 carries the phosphoserine modification.

The protein belongs to the SOSS-C family. Component of the SOSS complex, composed of SOSS-B (SOSS-B1/NABP2 or SOSS-B2/NABP1), SOSS-A/INTS3 and SOSS-C/INIP. SOSS complexes containing SOSS-B1/NABP2 are more abundant than complexes containing SOSS-B2/NABP1. Interacts with INTS3; the interaction is direct.

It is found in the nucleus. In terms of biological role, component of the SOSS complex, a multiprotein complex that functions downstream of the MRN complex to promote DNA repair and G2/M checkpoint. The SOSS complex associates with single-stranded DNA at DNA lesions and influences diverse endpoints in the cellular DNA damage response including cell-cycle checkpoint activation, recombinational repair and maintenance of genomic stability. Required for efficient homologous recombination-dependent repair of double-strand breaks (DSBs) and ATM-dependent signaling pathways. This chain is SOSS complex subunit C (INIP), found in Homo sapiens (Human).